A 319-amino-acid polypeptide reads, in one-letter code: tRNA uridine(34) hydroxylase (319 aa).

Positions 133–231 (EDPNSVVIDT…YLEDVSSENS (99 aa)) constitute a Rhodanese domain. Catalysis depends on Cys191, which acts as the Cysteine persulfide intermediate.

Belongs to the TrhO family.

The enzyme catalyses uridine(34) in tRNA + AH2 + O2 = 5-hydroxyuridine(34) in tRNA + A + H2O. Its function is as follows. Catalyzes oxygen-dependent 5-hydroxyuridine (ho5U) modification at position 34 in tRNAs. This Prochlorococcus marinus (strain NATL2A) protein is tRNA uridine(34) hydroxylase.